Reading from the N-terminus, the 353-residue chain is Photosystem II D2 protein (353 aa).

Threonine 2 bears the N-acetylthreonine mark. Phosphothreonine is present on threonine 2. The helical transmembrane segment at 41–61 threads the bilayer; that stretch reads CAYFALGGWFTGTTFVTSWYT. Residue histidine 118 participates in chlorophyll a binding. The helical transmembrane segment at 125 to 141 threads the bilayer; it reads GFMLRQFELARSVQLRP. Pheophytin a is bound by residues glutamine 130 and asparagine 143. Residues 153–166 form a helical membrane-spanning segment; it reads VFISVFFIYPLGQS. Residue histidine 198 coordinates chlorophyll a. Residues 208-228 traverse the membrane as a helical segment; sequence AALLCAIHGATVENTLFEDGD. 2 residues coordinate a plastoquinone: histidine 215 and phenylalanine 262. Histidine 215 provides a ligand contact to Fe cation. Residue histidine 269 participates in Fe cation binding. Residues 279-295 traverse the membrane as a helical segment; that stretch reads GLWMSALGVVGLALNLR.

The protein belongs to the reaction center PufL/M/PsbA/D family. In terms of assembly, PSII is composed of 1 copy each of membrane proteins PsbA, PsbB, PsbC, PsbD, PsbE, PsbF, PsbH, PsbI, PsbJ, PsbK, PsbL, PsbM, PsbT, PsbX, PsbY, PsbZ, Psb30/Ycf12, at least 3 peripheral proteins of the oxygen-evolving complex and a large number of cofactors. It forms dimeric complexes. It depends on The D1/D2 heterodimer binds P680, chlorophylls that are the primary electron donor of PSII, and subsequent electron acceptors. It shares a non-heme iron and each subunit binds pheophytin, quinone, additional chlorophylls, carotenoids and lipids. There is also a Cl(-1) ion associated with D1 and D2, which is required for oxygen evolution. The PSII complex binds additional chlorophylls, carotenoids and specific lipids. as a cofactor.

It is found in the plastid membrane. It carries out the reaction 2 a plastoquinone + 4 hnu + 2 H2O = 2 a plastoquinol + O2. Its function is as follows. Photosystem II (PSII) is a light-driven water:plastoquinone oxidoreductase that uses light energy to abstract electrons from H(2)O, generating O(2) and a proton gradient subsequently used for ATP formation. It consists of a core antenna complex that captures photons, and an electron transfer chain that converts photonic excitation into a charge separation. The D1/D2 (PsbA/PsbD) reaction center heterodimer binds P680, the primary electron donor of PSII as well as several subsequent electron acceptors. D2 is needed for assembly of a stable PSII complex. The chain is Photosystem II D2 protein from Cuscuta reflexa (Southern Asian dodder).